The primary structure comprises 212 residues: MDSKNCVVIAIAGASASGKSLIANTIYQELCEELGTNQIGMISEDSYYRDQSHLELELRKLTNYDHPKAFEHELLCSHLKMLKENCSVNIPVYSYTEHTRTLESETMTSKKVIILEGILLLNDSALREQIDVSIFIDTPLDICLMRRLVRDMAERERTMDSVLLQYTKTVRPMFLQFIEPSKQHADIIVPRGGKNRIAKDLLKTRIKYLLGK.

G13–S20 lines the ATP pocket.

The protein belongs to the uridine kinase family.

It is found in the cytoplasm. The catalysed reaction is uridine + ATP = UMP + ADP + H(+). It carries out the reaction cytidine + ATP = CMP + ADP + H(+). It functions in the pathway pyrimidine metabolism; CTP biosynthesis via salvage pathway; CTP from cytidine: step 1/3. It participates in pyrimidine metabolism; UMP biosynthesis via salvage pathway; UMP from uridine: step 1/1. The protein is Uridine kinase of Psychromonas ingrahamii (strain DSM 17664 / CCUG 51855 / 37).